We begin with the raw amino-acid sequence, 95 residues long: MSRRCELTGKGVQVGNNVSHANNKTKRRFLPNLNDVTLMSETLGRGFKLRISAAALRTVDHRGGLDSFLAKAKDAELSEKALKIKKDIAKAQAAA.

Belongs to the bacterial ribosomal protein bL28 family.

This is Large ribosomal subunit protein bL28 from Dinoroseobacter shibae (strain DSM 16493 / NCIMB 14021 / DFL 12).